Here is a 239-residue protein sequence, read N- to C-terminus: Ribonuclease PH (239 aa).

Residues Arg-87 and 125-127 each bind phosphate; that span reads GTR.

It belongs to the RNase PH family. In terms of assembly, homohexameric ring arranged as a trimer of dimers.

The catalysed reaction is tRNA(n+1) + phosphate = tRNA(n) + a ribonucleoside 5'-diphosphate. In terms of biological role, phosphorolytic 3'-5' exoribonuclease that plays an important role in tRNA 3'-end maturation. Removes nucleotide residues following the 3'-CCA terminus of tRNAs; can also add nucleotides to the ends of RNA molecules by using nucleoside diphosphates as substrates, but this may not be physiologically important. Probably plays a role in initiation of 16S rRNA degradation (leading to ribosome degradation) during starvation. In Cyanothece sp. (strain PCC 7425 / ATCC 29141), this protein is Ribonuclease PH.